The chain runs to 210 residues: GRF1-interacting factor 1 (210 aa).

The span at A135–S152 shows a compositional bias: low complexity. The tract at residues A135–N210 is disordered. Positions G182–G198 are enriched in gly residues.

Belongs to the SS18 family. As to quaternary structure, interacts with GRF1, GRF2, GRF5 and GRF9. As to expression, strongly expressed in actively growing and developing tissues, such as roots, upper stems, and shoot tips and flower buds. Also expressed in mature flowers. Not expressed in the shoot apical meristem (SAM). Highly accumulated in the proximal part of leaf primordia, in the key proliferative zone at the junction region between the leaf blade and leaf petiole.

In terms of biological role, transcription coactivator that plays a role in the regulation of cell expansion in leaf and cotyledons tissues. Component of a network formed by miR396, the GRFs and their interacting factors (GIFs) acting in the regulation of meristem function, at least partially through the control of cell proliferation. Appears to function synergistically with GRF1 as a transcriptional coactivator. Acts together with GRF5 for the development of appropriate leaf size and shape through the promotion and/or maintenance of cell proliferation activity in leaf primordia. Plays a role in adaxial/abaxial patterning and growth in leaf morphogenesis. GIFs are involved in the positive regulation of cell proliferation of lateral organs in a functionally redundant manner. Together with GATA18/HAN, mediates cotyledon identity by preventing ectopic root formation through the repression of PLT1 expression. The sequence is that of GRF1-interacting factor 1 from Arabidopsis thaliana (Mouse-ear cress).